We begin with the raw amino-acid sequence, 676 residues long: Zinc finger CCCH domain-containing protein 38 (676 aa).

5 disordered regions span residues M1–F134, S172–N217, R245–D307, S487–Q506, and I533–G594. Residues S12–H21 show a composition bias toward basic and acidic residues. A compositionally biased stretch (polar residues) spans R58–V79. Basic and acidic residues-rich tracts occupy residues A101 to R110, E124 to F134, and S192 to F212. Residues R214 to A243 form a C3H1-type zinc finger. Residues N251 to N262 are compositionally biased toward low complexity. A compositionally biased stretch (basic and acidic residues) spans K269–N278. The span at L538–E562 shows a compositional bias: basic and acidic residues. Over residues D563 to D583 the composition is skewed to acidic residues. The span at E584–G594 shows a compositional bias: basic and acidic residues.

The chain is Zinc finger CCCH domain-containing protein 38 from Arabidopsis thaliana (Mouse-ear cress).